Here is a 328-residue protein sequence, read N- to C-terminus: UPF0252 protein PF0978 (328 aa).

The chain crosses the membrane as a helical span at residues 3–23; it reads VPLLILLFLVLTSGCIAPSTP.

The protein belongs to the UPF0252 family.

The protein localises to the membrane. This Pyrococcus furiosus (strain ATCC 43587 / DSM 3638 / JCM 8422 / Vc1) protein is UPF0252 protein PF0978.